A 154-amino-acid chain; its full sequence is Terephthalate 1,2-dioxygenase, terminal oxygenase component subunit beta 2 (154 aa).

Belongs to the bacterial ring-hydroxylating dioxygenase beta subunit family. In terms of assembly, heterotetramer composed of 2 alpha (TphA2I and TphA2II) and 2 beta (TphA3I and TphA3II) subunits. Part of a multicomponent enzyme system composed of a reductase (TphA1I or TphA1II) and a two-subunit oxygenase component (TphA2I or TphA2II and TphA3I or TphA3II). It depends on Fe cation as a cofactor.

It catalyses the reaction terephthalate + NADH + O2 + H(+) = (3S,4R)-3,4-dihydroxycyclohexa-1,5-diene-1,4-dicarboxylate + NAD(+). With respect to regulation, inhibited by EDTA. Component of the terephthalate 1,2-dioxygenase multicomponent enzyme system which catalyzes the dioxygenation of terephthalate (TER/TPA) to 1,2-dihydroxy-3,5-cyclohexadiene-1,4-dicarboxylic acid (DCD). It can also use 2,5-dicarboxypyridine (PDC) and 1,4-napthalenedicarboxylic acid (NDC) as substrates, and preferentially uses NADPH which is the physiological electron donor. The chain is Terephthalate 1,2-dioxygenase, terminal oxygenase component subunit beta 2 (tphA3II) from Comamonas sp.